A 286-amino-acid chain; its full sequence is Fructose-bisphosphate aldolase (286 aa).

Serine 50 serves as a coordination point for D-glyceraldehyde 3-phosphate. The active-site Proton donor is aspartate 85. The Zn(2+) site is built by histidine 86, aspartate 107, glutamate 137, and histidine 181. Dihydroxyacetone phosphate is bound at residue glycine 182. Histidine 209 provides a ligand contact to Zn(2+). Residues 210–212 (GGT) and 231–234 (NVNT) contribute to the dihydroxyacetone phosphate site.

It belongs to the class II fructose-bisphosphate aldolase family. The cofactor is Zn(2+).

The enzyme catalyses beta-D-fructose 1,6-bisphosphate = D-glyceraldehyde 3-phosphate + dihydroxyacetone phosphate. It functions in the pathway carbohydrate degradation; glycolysis; D-glyceraldehyde 3-phosphate and glycerone phosphate from D-glucose: step 4/4. In terms of biological role, catalyzes the aldol condensation of dihydroxyacetone phosphate (DHAP or glycerone-phosphate) with glyceraldehyde 3-phosphate (G3P) to form fructose 1,6-bisphosphate (FBP) in gluconeogenesis and the reverse reaction in glycolysis. In Staphylococcus aureus (strain MSSA476), this protein is Fructose-bisphosphate aldolase (fba).